The chain runs to 498 residues: Dynein regulatory complex subunit 2 (498 aa).

Coiled coils occupy residues 98–160 (VIKS…RKTI), 250–311 (KDEK…KAQR), and 417–441 (SLRH…QYLD).

This sequence belongs to the DRC2 family. In terms of assembly, component of the nexin-dynein regulatory complex (N-DRC). Interacts with DRC1.

Its subcellular location is the cytoplasm. The protein resides in the cytoskeleton. It is found in the flagellum basal body. It localises to the cell projection. The protein localises to the cilium. Its subcellular location is the flagellum. The protein resides in the flagellum axoneme. Its function is as follows. Component of the nexin-dynein regulatory complex (N-DRC), a key regulator of ciliary/flagellar motility which maintains the alignment and integrity of the distal axoneme and regulates microtubule sliding in motile axonemes. Plays a critical role in the assembly of N-DRC and also stabilizes the assembly of multiple inner dynein arms and radial spokes. Coassembles with DRC1 to form a central scaffold needed for assembly of the N-DRC and its attachment to the outer doublet microtubules. This Bos taurus (Bovine) protein is Dynein regulatory complex subunit 2 (CCDC65).